The primary structure comprises 124 residues: Small ribosomal subunit protein uS12 (124 aa).

This sequence belongs to the universal ribosomal protein uS12 family. Part of the 30S ribosomal subunit. Contacts proteins S8 and S17. May interact with IF1 in the 30S initiation complex.

With S4 and S5 plays an important role in translational accuracy. Its function is as follows. Interacts with and stabilizes bases of the 16S rRNA that are involved in tRNA selection in the A site and with the mRNA backbone. Located at the interface of the 30S and 50S subunits, it traverses the body of the 30S subunit contacting proteins on the other side and probably holding the rRNA structure together. The combined cluster of proteins S8, S12 and S17 appears to hold together the shoulder and platform of the 30S subunit. In Photorhabdus laumondii subsp. laumondii (strain DSM 15139 / CIP 105565 / TT01) (Photorhabdus luminescens subsp. laumondii), this protein is Small ribosomal subunit protein uS12.